A 116-amino-acid chain; its full sequence is MAGFGLPNFGQLTEAFKKAKQIQQDAQKLQDELENMEIEGKSDDEMIKVWISGNQLPLKVEVQENFLNADKEKIEQNILQAIKKAHELSTTTMKERMNDLTGGLNLNLPGFDNNDS.

Belongs to the YbaB/EbfC family. Homodimer.

The protein localises to the cytoplasm. It localises to the nucleoid. Its function is as follows. Binds to DNA and alters its conformation. May be involved in regulation of gene expression, nucleoid organization and DNA protection. This Prochlorococcus marinus (strain MIT 9301) protein is Nucleoid-associated protein P9301_00191.